We begin with the raw amino-acid sequence, 437 residues long: Glutamate-1-semialdehyde 2,1-aminomutase 1 (437 aa).

At K268 the chain carries N6-(pyridoxal phosphate)lysine.

Belongs to the class-III pyridoxal-phosphate-dependent aminotransferase family. HemL subfamily. In terms of assembly, homodimer. It depends on pyridoxal 5'-phosphate as a cofactor.

The protein localises to the cytoplasm. The catalysed reaction is (S)-4-amino-5-oxopentanoate = 5-aminolevulinate. The protein operates within porphyrin-containing compound metabolism; protoporphyrin-IX biosynthesis; 5-aminolevulinate from L-glutamyl-tRNA(Glu): step 2/2. The sequence is that of Glutamate-1-semialdehyde 2,1-aminomutase 1 from Halalkalibacterium halodurans (strain ATCC BAA-125 / DSM 18197 / FERM 7344 / JCM 9153 / C-125) (Bacillus halodurans).